Consider the following 509-residue polypeptide: Group 3 secretory phospholipase A2 (509 aa).

Positions 1-19 (MGVQAGLFGMLGFLGVALG) are cleaved as a signal peptide. The interval 123–149 (ESPAGARKKRAAGQSGVPGGGHQREKR) is disordered. Positions 150-291 (GWTMPGTLWC…SWSSRATSPT (142 aa)) are phospholipase A2-like. The Ca(2+) site is built by W158, G160, and G162. Intrachain disulfides connect C159/C181, C180/C220, C187/C213, and C211/C244. Residue N167 is glycosylated (N-linked (GlcNAc...) asparagine). H184 is an active-site residue. Position 185 (D185) interacts with Ca(2+). D214 is a catalytic residue. N280 is a glycosylation site (N-linked (GlcNAc...) asparagine). The tract at residues 283–354 (WSSRATSPTP…LQGPQGGLKP (72 aa)) is disordered. The span at 284–296 (SSRATSPTPSSRS) shows a compositional bias: low complexity. Positions 302 to 322 (PRQKQHLRKGPPHQKGSKRPS) are enriched in basic residues. N-linked (GlcNAc...) asparagine glycosylation is found at N325, N396, and N439. Residues 458 to 482 (QQRRHQLQDKGTDERQPWPSEPLRG) are disordered. Residues 463–473 (QLQDKGTDERQ) show a composition bias toward basic and acidic residues.

It belongs to the phospholipase A2 family. Ca(2+) is required as a cofactor. N-glycosylation does not affect the catalytic activity, but is required for proper secretion. A nonglycosylated form is observed in several cell types. In terms of processing, in several cell types, the N- and C-termini are cleaved off. Expressed in kidney, heart, liver, and skeletal muscle. Also present in placenta and peripheral blood leukocytes. Not detected in colon, thymus, spleen and small intestine. In lung, expressed in bronchial epithelial cells and alveolar macrophages, but scarcely detected in alveolar epithelium, arterial walls and interstitial fibroblasts (at protein level). In joints of osteoarthritis and rheumatoid arthritis, expressed in endothelial cells (at protein level). In normal heart, detected in some vessels. In myocardial tissues with acute infarction, expressed in vascular endothelial cells adjacent to cardiomyocytes and those in lesions with granulation. Expression in cardiomyocytes is scarce (at protein level). In uterus, breast and colon cancers, detected in tumor cells and neighboring microvascular endothelium, but not in normal glandular tissues (at protein level). Expressed in dermal resting mast cells (at protein level) and pulmonary mast cells. Expressed in neuronal fibers (at protein level). Highly expressed in dorsal root ganglia neurons (at protein level). Expressed in Purkinje cells in cerebellum (at protein level). In stomach is preferentially expressed in neuronal fibers and in microvascular endothelium. Sparsely expressed in normal aorta (at protein level). Highly expressed in macrophages and smooth muscle cells in aorta with atheroma.

Its subcellular location is the secreted. The protein localises to the cell membrane. It is found in the cytoplasm. It localises to the cytoskeleton. The protein resides in the microtubule organizing center. Its subcellular location is the centrosome. The protein localises to the centriole. It is found in the recycling endosome. It catalyses the reaction a 1,2-diacyl-sn-glycero-3-phosphocholine + H2O = a 1-acyl-sn-glycero-3-phosphocholine + a fatty acid + H(+). The enzyme catalyses 1-hexadecanoyl-2-(9Z,12Z-octadecadienoyl)-sn-glycero-3-phosphocholine + H2O = (9Z,12Z)-octadecadienoate + 1-hexadecanoyl-sn-glycero-3-phosphocholine + H(+). It carries out the reaction 1-hexadecanoyl-2-(5Z,8Z,11Z,14Z-eicosatetraenoyl)-sn-glycero-3-phosphocholine + H2O = 1-hexadecanoyl-sn-glycero-3-phosphocholine + (5Z,8Z,11Z,14Z)-eicosatetraenoate + H(+). The catalysed reaction is 1-hexadecanoyl-2-(9Z,12Z-octadecadienoyl)-sn-glycero-3-phosphoethanolamine + H2O = 1-hexadecanoyl-sn-glycero-3-phosphoethanolamine + (9Z,12Z)-octadecadienoate + H(+). It catalyses the reaction 1-hexadecanoyl-2-(5Z,8Z,11Z,14Z-eicosatetraenoyl)-sn-glycero-3-phosphoethanolamine + H2O = 1-hexadecanoyl-sn-glycero-3-phosphoethanolamine + (5Z,8Z,11Z,14Z)-eicosatetraenoate + H(+). Its activity is regulated as follows. Arachidonic acid release is markedly increased by glypican, a glycosylphosphatidylinositol-anchored heparan sulfate proteoglycan. Secretory calcium-dependent phospholipase A2 that primarily targets extracellular phospholipids. Hydrolyzes the ester bond of the fatty acyl group attached at sn-2 position of phospholipids without apparent head group selectivity. Contributes to phospholipid remodeling of low-density lipoprotein (LDL) and high-density lipoprotein (HDL) particles. Hydrolyzes LDL phospholipids releasing unsaturated fatty acids that regulate macrophage differentiation toward foam cells. May act in an autocrine and paracrine manner. Secreted by immature mast cells, acts on nearby fibroblasts upstream to PTDGS to synthesize prostaglandin D2 (PGD2), which in turn promotes mast cell maturation and degranulation via PTGDR. Secreted by epididymal epithelium, acts on immature sperm cells within the duct, modulating the degree of unsaturation of the fatty acyl components of phosphatidylcholines required for acrosome assembly and sperm cell motility. Facilitates the replacement of fatty acyl chains in phosphatidylcholines in sperm membranes from omega-6 and omega-9 to omega-3 polyunsaturated fatty acids (PUFAs). Coupled to lipoxygenase pathway, may process omega-6 PUFAs to generate oxygenated lipid mediators in the male reproductive tract. At pericentrosomal preciliary compartment, negatively regulates ciliogenesis likely by regulating endocytotic recycling of ciliary membrane protein. Coupled to cyclooxygenase pathway provides arachidonate to generate prostaglandin E2 (PGE2), a potent immunomodulatory lipid in inflammation and tumorigenesis. At colonic epithelial barrier, preferentially hydrolyzes phospholipids having arachidonate and docosahexaenoate at sn-2 position, contributing to the generation of oxygenated metabolites involved in colonic stem cell homeostasis. Releases C16:0 and C18:0 lysophosphatidylcholine subclasses from neuron plasma membranes and promotes neurite outgrowth and neuron survival. This chain is Group 3 secretory phospholipase A2, found in Homo sapiens (Human).